Reading from the N-terminus, the 288-residue chain is 4-hydroxy-tetrahydrodipicolinate synthase (288 aa).

Threonine 42 is a pyruvate binding site. The Proton donor/acceptor role is filled by tyrosine 129. Catalysis depends on lysine 158, which acts as the Schiff-base intermediate with substrate. Isoleucine 200 is a pyruvate binding site.

This sequence belongs to the DapA family. Homotetramer; dimer of dimers.

The protein resides in the cytoplasm. It catalyses the reaction L-aspartate 4-semialdehyde + pyruvate = (2S,4S)-4-hydroxy-2,3,4,5-tetrahydrodipicolinate + H2O + H(+). Its pathway is amino-acid biosynthesis; L-lysine biosynthesis via DAP pathway; (S)-tetrahydrodipicolinate from L-aspartate: step 3/4. Its function is as follows. Catalyzes the condensation of (S)-aspartate-beta-semialdehyde [(S)-ASA] and pyruvate to 4-hydroxy-tetrahydrodipicolinate (HTPA). The chain is 4-hydroxy-tetrahydrodipicolinate synthase from Thermosipho melanesiensis (strain DSM 12029 / CIP 104789 / BI429).